A 335-amino-acid chain; its full sequence is Stearoyl-CoA desaturase 5 (335 aa).

The Cytoplasmic portion of the chain corresponds to 1-54 (MPGPAVDAEKVPFRSAKEEIRAGVGVEGSEGGGGGGGRERPGARGHRQDIVWRN). Positions 24–44 (VGVEGSEGGGGGGGRERPGAR) are disordered. Residues 25–36 (GVEGSEGGGGGG) are compositionally biased toward gly residues. Position 54 (asparagine 54) interacts with substrate. Residues 55–75 (VFLMSLLHLAAVYSLVLIPKA) traverse the membrane as a helical segment. Topologically, residues 76–77 (QP) are lumenal. The chain crosses the membrane as a helical span at residues 78 to 98 (LTLLWAYFCFLLTALGVTAGA). Fe cation is bound by residues histidine 99 and histidine 104. The Histidine box-1 motif lies at 99–104 (HRLWSH). At 99-198 (HRLWSHRSYK…VVRFQRKYYK (100 aa)) the chain is on the cytoplasmic side. Substrate is bound by residues asparagine 127, arginine 134, and aspartate 135. The Fe cation site is built by histidine 136, histidine 139, and histidine 140. A Histidine box-2 motif is present at residues 136–140 (HRVHH). Substrate contacts are provided by arginine 167 and lysine 168. The helical transmembrane segment at 199-219 (ITVVLMCFVVPTLVPWYIWGE) threads the bilayer. Over 220–227 (SLWNSYFL) the chain is Lumenal. Residues 228–247 (ASILRYTISLNVTWLVNSVA) form a helical membrane-spanning segment. Tryptophan 241 is a binding site for substrate. The Fe cation site is built by histidine 248, histidine 277, histidine 280, and histidine 281. Residues 248 to 335 (HMYGNRPYDK…RKARTGDGSA (88 aa)) are Cytoplasmic-facing. The short motif at 277–281 (HNYHH) is the Histidine box-3 element.

It belongs to the fatty acid desaturase type 1 family. As to quaternary structure, may self-associate and form homodimers. Fe(2+) serves as cofactor. In terms of tissue distribution, detected in brain.

The protein resides in the endoplasmic reticulum membrane. The enzyme catalyses octadecanoyl-CoA + 2 Fe(II)-[cytochrome b5] + O2 + 2 H(+) = (9Z)-octadecenoyl-CoA + 2 Fe(III)-[cytochrome b5] + 2 H2O. The catalysed reaction is hexadecanoyl-CoA + 2 Fe(II)-[cytochrome b5] + O2 + 2 H(+) = (9Z)-hexadecenoyl-CoA + 2 Fe(III)-[cytochrome b5] + 2 H2O. In terms of biological role, stearoyl-CoA desaturase that utilizes O(2) and electrons from reduced cytochrome b5 to introduce the first double bond into saturated fatty acyl-CoA substrates. Catalyzes the insertion of a cis double bond at the delta-9 position into fatty acyl-CoA substrates including palmitoyl-CoA and stearoyl-CoA. Gives rise to a mixture of 16:1 and 18:1 unsaturated fatty acids. Involved in neuronal cell proliferation and differentiation through down-regulation of EGFR/AKT/MAPK and Wnt signaling pathways. The polypeptide is Stearoyl-CoA desaturase 5 (SCD5) (Bos taurus (Bovine)).